Consider the following 214-residue polypeptide: Adenylate kinase (214 aa).

An ATP-binding site is contributed by 10-15; the sequence is GAGKGT. Residues 30 to 59 are NMP; that stretch reads STGDMLRAAVKAGSELGLKAKEIMDAGKLV. Residues Thr-31, Arg-36, 57–59, 85–88, and Gln-92 each bind AMP; these read KLV and GFPR. Residues 122–159 form an LID region; it reads GRRVHAPSGRVYHVTFNPPRVEGKDDMTGEELTTRKDD. ATP contacts are provided by residues Arg-123 and 132–133; that span reads VY. Positions 156 and 167 each coordinate AMP. Arg-200 provides a ligand contact to ATP.

The protein belongs to the adenylate kinase family. Monomer.

Its subcellular location is the cytoplasm. The enzyme catalyses AMP + ATP = 2 ADP. The protein operates within purine metabolism; AMP biosynthesis via salvage pathway; AMP from ADP: step 1/1. Catalyzes the reversible transfer of the terminal phosphate group between ATP and AMP. Plays an important role in cellular energy homeostasis and in adenine nucleotide metabolism. This Erwinia tasmaniensis (strain DSM 17950 / CFBP 7177 / CIP 109463 / NCPPB 4357 / Et1/99) protein is Adenylate kinase.